The primary structure comprises 244 residues: Biosynthetic peptidoglycan transglycosylase (244 aa).

A helical membrane pass occupies residues 25 to 45 (LLLLLAIALLYQSWFLLHIIY).

This sequence belongs to the glycosyltransferase 51 family.

It is found in the cell inner membrane. The catalysed reaction is [GlcNAc-(1-&gt;4)-Mur2Ac(oyl-L-Ala-gamma-D-Glu-L-Lys-D-Ala-D-Ala)](n)-di-trans,octa-cis-undecaprenyl diphosphate + beta-D-GlcNAc-(1-&gt;4)-Mur2Ac(oyl-L-Ala-gamma-D-Glu-L-Lys-D-Ala-D-Ala)-di-trans,octa-cis-undecaprenyl diphosphate = [GlcNAc-(1-&gt;4)-Mur2Ac(oyl-L-Ala-gamma-D-Glu-L-Lys-D-Ala-D-Ala)](n+1)-di-trans,octa-cis-undecaprenyl diphosphate + di-trans,octa-cis-undecaprenyl diphosphate + H(+). The protein operates within cell wall biogenesis; peptidoglycan biosynthesis. Its function is as follows. Peptidoglycan polymerase that catalyzes glycan chain elongation from lipid-linked precursors. This Nitrosomonas eutropha (strain DSM 101675 / C91 / Nm57) protein is Biosynthetic peptidoglycan transglycosylase.